The sequence spans 269 residues: Interleukin-1 beta (269 aa).

The propeptide occupies 1-117; it reads MATVPELNCE…DDDDNLLVCD (117 aa).

It belongs to the IL-1 family. As to quaternary structure, monomer. Interacts with MEFV. Interacts with integrins ITGAV:ITGBV and ITGA5:ITGB1; integrin-binding is required for IL1B signaling. Interacts with cargo receptor TMED10; the interaction is direct and is required for the secretion of IL1B mature form. Interacts with HSP90AB1; the interaction facilitates cargo translocation into the ERGIC. Interacts with HSP90B1; the interaction facilitates cargo translocation into the ERGIC. As to expression, expressed in activated macrophages (at protein level).

Its subcellular location is the cytoplasm. The protein resides in the cytosol. It localises to the secreted. The protein localises to the lysosome. It is found in the extracellular exosome. Functionally, potent pro-inflammatory cytokine. Initially discovered as the major endogenous pyrogen, induces prostaglandin synthesis, neutrophil influx and activation, T-cell activation and cytokine production, B-cell activation and antibody production, and fibroblast proliferation and collagen production. Promotes Th17 differentiation of T-cells. Synergizes with IL12/interleukin-12 to induce IFNG synthesis from T-helper 1 (Th1) cells. Plays a role in angiogenesis by inducing VEGF production synergistically with TNF and IL6. Involved in transduction of inflammation downstream of pyroptosis: its mature form is specifically released in the extracellular milieu by passing through the gasdermin-D (GSDMD) pore. The chain is Interleukin-1 beta (Il1b) from Mus musculus (Mouse).